Consider the following 195-residue polypeptide: Probable GTP-binding protein EngB (195 aa).

One can recognise an EngB-type G domain in the interval 22-195 (GLPEIALAGR…WGAIKKMISR (174 aa)). GTP-binding positions include 30–37 (GRSNVGKS), 57–61 (GKTQT), 75–78 (DVPG), 142–145 (TKAD), and 174–176 (FSS). Residues Ser37 and Thr59 each coordinate Mg(2+).

The protein belongs to the TRAFAC class TrmE-Era-EngA-EngB-Septin-like GTPase superfamily. EngB GTPase family. Requires Mg(2+) as cofactor.

Necessary for normal cell division and for the maintenance of normal septation. The sequence is that of Probable GTP-binding protein EngB from Bacillus velezensis (strain DSM 23117 / BGSC 10A6 / LMG 26770 / FZB42) (Bacillus amyloliquefaciens subsp. plantarum).